The sequence spans 211 residues: Protein-L-isoaspartate O-methyltransferase (211 aa).

S62 is a catalytic residue.

The protein belongs to the methyltransferase superfamily. L-isoaspartyl/D-aspartyl protein methyltransferase family.

It localises to the cytoplasm. It carries out the reaction [protein]-L-isoaspartate + S-adenosyl-L-methionine = [protein]-L-isoaspartate alpha-methyl ester + S-adenosyl-L-homocysteine. Its function is as follows. Catalyzes the methyl esterification of L-isoaspartyl residues in peptides and proteins that result from spontaneous decomposition of normal L-aspartyl and L-asparaginyl residues. It plays a role in the repair and/or degradation of damaged proteins. This is Protein-L-isoaspartate O-methyltransferase from Shewanella piezotolerans (strain WP3 / JCM 13877).